Here is a 381-residue protein sequence, read N- to C-terminus: Cytochrome b (381 aa).

The next 4 helical transmembrane spans lie at 34–54 (FGSL…FLAM), 78–99 (WLIR…YIHI), 114–134 (WNIG…GYVL), and 179–199 (FFAF…IHVL). 2 residues coordinate heme b: His-84 and His-98. Heme b-binding residues include His-183 and His-197. His-202 is a binding site for a ubiquinone. 4 consecutive transmembrane segments (helical) span residues 227–247 (YKDA…ALFL), 289–309 (LGGV…PLLH), 321–341 (LTQV…WIGG), and 348–368 (FILI…IAMP).

It belongs to the cytochrome b family. As to quaternary structure, the cytochrome bc1 complex contains 3 respiratory subunits (MT-CYB, CYC1 and UQCRFS1), 2 core proteins (UQCRC1 and UQCRC2) and probably 6 low-molecular weight proteins. Requires heme b as cofactor.

It is found in the mitochondrion inner membrane. Its function is as follows. Component of the ubiquinol-cytochrome c reductase complex (complex III or cytochrome b-c1 complex) that is part of the mitochondrial respiratory chain. The b-c1 complex mediates electron transfer from ubiquinol to cytochrome c. Contributes to the generation of a proton gradient across the mitochondrial membrane that is then used for ATP synthesis. The chain is Cytochrome b (mt-cyb) from Isurus paucus (Longfin mako shark).